Here is a 202-residue protein sequence, read N- to C-terminus: Neurensin-2 (202 aa).

The next 2 membrane-spanning stretches (helical) occupy residues 65 to 85 (VAVA…GYAV) and 116 to 136 (VVGA…LFLI). Residues 162–202 (RDEPEKLSPAFHETSSQSPFLTPPSPFGQQSVQTSQPQRDL) form a disordered region. Residues 188-202 (FGQQSVQTSQPQRDL) show a composition bias toward polar residues.

This sequence belongs to the VMP family. In terms of tissue distribution, expressed specifically in brain where it is widely expressed, with highest levels of expression in thalamus and hypothalamus. In brain, found in neural cell bodies and detected in many regions of the limbic system, such as the septum nucleus, horizontal and vertical limbs of the diagonal band, hippocampus, amygdaloid nucleus, and habernula nucleus. Also localizes to small vesicles found in the perinuclear region of Neuro2a and PC12 cells.

It localises to the membrane. Its function is as follows. May play a role in maintenance and/or transport of vesicles. The protein is Neurensin-2 of Mus musculus (Mouse).